A 269-amino-acid chain; its full sequence is Cytochrome c oxidase subunit 3 (269 aa).

Transmembrane regions (helical) follow at residues 21-41, 49-69, 90-110, 132-152, 167-187, 205-225, and 247-267; these read PWPM…GLTA, MFML…FKDI, GFLM…WAFL, ISAA…GVTM, TLYG…FQGL, FFAL…MLAM, and ILYL…VYWW.

It belongs to the cytochrome c oxidase subunit 3 family. Component of the cytochrome c oxidase (complex IV, CIV), a multisubunit enzyme composed of a catalytic core of 3 subunits and several supernumerary subunits. The complex exists as a monomer or a dimer and forms supercomplexes (SCs) in the inner mitochondrial membrane with ubiquinol-cytochrome c oxidoreductase (cytochrome b-c1 complex, complex III, CIII).

It localises to the mitochondrion inner membrane. The enzyme catalyses 4 Fe(II)-[cytochrome c] + O2 + 8 H(+)(in) = 4 Fe(III)-[cytochrome c] + 2 H2O + 4 H(+)(out). Functionally, component of the cytochrome c oxidase, the last enzyme in the mitochondrial electron transport chain which drives oxidative phosphorylation. The respiratory chain contains 3 multisubunit complexes succinate dehydrogenase (complex II, CII), ubiquinol-cytochrome c oxidoreductase (cytochrome b-c1 complex, complex III, CIII) and cytochrome c oxidase (complex IV, CIV), that cooperate to transfer electrons derived from NADH and succinate to molecular oxygen, creating an electrochemical gradient over the inner membrane that drives transmembrane transport and the ATP synthase. Cytochrome c oxidase is the component of the respiratory chain that catalyzes the reduction of oxygen to water. Electrons originating from reduced cytochrome c in the intermembrane space (IMS) are transferred via the dinuclear copper A center (CU(A)) of subunit 2 and heme A of subunit 1 to the active site in subunit 1, a binuclear center (BNC) formed by heme A3 and copper B (CU(B)). The BNC reduces molecular oxygen to 2 water molecules using 4 electrons from cytochrome c in the IMS and 4 protons from the mitochondrial matrix. The chain is Cytochrome c oxidase subunit 3 (COX3) from Debaryomyces hansenii (strain ATCC 36239 / CBS 767 / BCRC 21394 / JCM 1990 / NBRC 0083 / IGC 2968) (Yeast).